A 233-amino-acid chain; its full sequence is 2,3-bisphosphoglycerate-dependent phosphoglycerate mutase (233 aa).

Substrate is bound by residues 8–15 (RHGQSLWN), 21–22 (TG), Arg60, 116–119 (ERYY), Lys127, 143–144 (RR), and 187–188 (GN). Catalysis depends on His9, which acts as the Tele-phosphohistidine intermediate. The Proton donor/acceptor role is filled by Glu116.

It belongs to the phosphoglycerate mutase family. BPG-dependent PGAM subfamily.

The enzyme catalyses (2R)-2-phosphoglycerate = (2R)-3-phosphoglycerate. The protein operates within carbohydrate degradation; glycolysis; pyruvate from D-glyceraldehyde 3-phosphate: step 3/5. Functionally, catalyzes the interconversion of 2-phosphoglycerate and 3-phosphoglycerate. In Gloeothece citriformis (strain PCC 7424) (Cyanothece sp. (strain PCC 7424)), this protein is 2,3-bisphosphoglycerate-dependent phosphoglycerate mutase.